The primary structure comprises 230 residues: Orotidine 5'-phosphate decarboxylase (230 aa).

Residues D10, K32, 59–68 (DLKYHDIPNT), T119, R180, Q189, G209, and R210 contribute to the substrate site. The active-site Proton donor is K61.

The protein belongs to the OMP decarboxylase family. Type 1 subfamily. Homodimer.

It carries out the reaction orotidine 5'-phosphate + H(+) = UMP + CO2. It participates in pyrimidine metabolism; UMP biosynthesis via de novo pathway; UMP from orotate: step 2/2. Catalyzes the decarboxylation of orotidine 5'-monophosphate (OMP) to uridine 5'-monophosphate (UMP). The protein is Orotidine 5'-phosphate decarboxylase of Haemophilus influenzae (strain ATCC 51907 / DSM 11121 / KW20 / Rd).